Consider the following 121-residue polypeptide: Large ribosomal subunit protein uL18 (121 aa).

The protein belongs to the universal ribosomal protein uL18 family. In terms of assembly, part of the 50S ribosomal subunit; part of the 5S rRNA/L5/L18/L25 subcomplex. Contacts the 5S and 23S rRNAs.

In terms of biological role, this is one of the proteins that bind and probably mediate the attachment of the 5S RNA into the large ribosomal subunit, where it forms part of the central protuberance. The chain is Large ribosomal subunit protein uL18 from Streptococcus thermophilus (strain CNRZ 1066).